Here is a 739-residue protein sequence, read N- to C-terminus: Platelet endothelial cell adhesion molecule (739 aa).

Positions 1–27 (MQLRWTQRGMMWLGALLTLLLCSSLKG) are cleaved as a signal peptide. At 28 to 599 (QENSFTINSI…TVRVYLPLEK (572 aa)) the chain is on the extracellular side. Ig-like C2-type domains are found at residues 35–120 (NSIH…EKTT), 145–213 (GGVV…IFSG), and 236–315 (PKFH…SKVS). 3 N-linked (GlcNAc...) asparagine glycosylation sites follow: Asn-52, Asn-84, and Asn-151. A disulfide bridge links Cys-57 with Cys-109. 2 disulfides stabilise this stretch: Cys-152/Cys-206 and Cys-256/Cys-304. Residues Asn-301, Asn-320, Asn-356, Asn-371, Asn-435, Asn-446, Asn-453, Asn-550, and Asn-578 are each glycosylated (N-linked (GlcNAc...) asparagine). 3 Ig-like C2-type domains span residues 328–403 (PKLE…VQIT), 424–493 (GQTI…EVLR), and 499–590 (PVDE…NTLT). 3 cysteine pairs are disulfide-bonded: Cys-347–Cys-386, Cys-431–Cys-476, and Cys-522–Cys-571. A helical transmembrane segment spans residues 600-618 (GLIAVVVIGVIIVTLVLGA). Residues 619–739 (KCYFLKKAKA…SRTEGSLDGS (121 aa)) are Cytoplasmic-facing. Cys-620 carries the S-palmitoyl cysteine lipid modification. Short sequence motifs (ITIM motif) lie at residues 687-692 (VEYTEV) and 712-717 (TVYSEI). 2 positions are modified to phosphotyrosine; by FER: Tyr-689 and Tyr-714. A membrane-bound segment which detaches upon phosphorylation region spans residues 708–730 (TETETVYSEIRKADPDFVENRYS). The segment at 722 to 739 (PDFVENRYSRTEGSLDGS) is may play a role in cytoprotective signaling. Phosphoserine occurs at positions 730 and 735.

Trans-homodimer (via Ig-like C2-type 1 and Ig-like C2-type 2 domains); trans-homodimerization is required for cell-cell interaction. Forms a complex with BDKRB2 and GNAQ. Interacts with BDKRB2 and GNAQ. Interacts with PTPN11; Tyr-714 is critical for PTPN11 recruitment. Interacts with FER. Interacts with CD177; the interaction is Ca(2+)-dependent; the interaction is direct. In terms of processing, phosphorylated on Ser and Tyr residues by src kinases after cellular activation. Upon activation, phosphorylated on Ser-730 which probably initiates the dissociation of the membrane-interaction segment (residues 708-730) from the cell membrane allowing the sequential phosphorylation of Tyr-714 and Tyr-689. Constitutively phosphorylated on Ser-735 in resting platelets. Phosphorylated on tyrosine residues by FER and FES in response to FCER1 activation. In endothelial cells Fyn mediates mechanical-force (stretch or pull) induced tyrosine phosphorylation. Post-translationally, palmitoylation by ZDHHC21 is necessary for cell surface expression in endothelial cells and enrichment in membrane rafts.

It localises to the cell membrane. Its subcellular location is the membrane raft. It is found in the cell junction. Functionally, cell adhesion molecule which is required for leukocyte transendothelial migration (TEM) under most inflammatory conditions. Tyr-689 plays a critical role in TEM and is required for efficient trafficking of PECAM1 to and from the lateral border recycling compartment (LBRC) and is also essential for the LBRC membrane to be targeted around migrating leukocytes. Trans-homophilic interaction may play a role in endothelial cell-cell adhesion via cell junctions. Heterophilic interaction with CD177 plays a role in transendothelial migration of neutrophils. Homophilic ligation of PECAM1 prevents macrophage-mediated phagocytosis of neighboring viable leukocytes by transmitting a detachment signal. Promotes macrophage-mediated phagocytosis of apoptotic leukocytes by tethering them to the phagocytic cells; PECAM1-mediated detachment signal appears to be disabled in apoptotic leukocytes. Modulates bradykinin receptor BDKRB2 activation. Regulates bradykinin- and hyperosmotic shock-induced ERK1/2 activation in endothelial cells. Induces susceptibility to atherosclerosis. The sequence is that of Platelet endothelial cell adhesion molecule (PECAM1) from Bos taurus (Bovine).